A 421-amino-acid chain; its full sequence is Succinate--CoA ligase [ADP-forming] subunit beta, mitochondrial (421 aa).

Residues 1–26 (MRGLVNKLVSRSLSISGKWQNQQLRR) constitute a mitochondrion transit peptide. The 244-residue stretch at 35-278 (AELMGKYGVN…PTQEDPREVA (244 aa)) folds into the ATP-grasp domain. Residues K74, 81 to 83 (GRG), and E141 each bind ATP. Mg(2+) contacts are provided by N233 and D247. Residues N298 and 355 to 357 (GIM) each bind substrate.

It belongs to the succinate/malate CoA ligase beta subunit family. In terms of assembly, heterodimer of an alpha and a beta subunit. It depends on Mg(2+) as a cofactor.

It localises to the mitochondrion. It catalyses the reaction succinate + ATP + CoA = succinyl-CoA + ADP + phosphate. Its pathway is carbohydrate metabolism; tricarboxylic acid cycle; succinate from succinyl-CoA (ligase route): step 1/1. Its function is as follows. Succinyl-CoA synthetase functions in the citric acid cycle (TCA), coupling the hydrolysis of succinyl-CoA to the synthesis of ATP and thus represents the only step of substrate-level phosphorylation in the TCA. The beta subunit provides nucleotide specificity of the enzyme and binds the substrate succinate, while the binding sites for coenzyme A and phosphate are found in the alpha subunit. The chain is Succinate--CoA ligase [ADP-forming] subunit beta, mitochondrial from Arabidopsis thaliana (Mouse-ear cress).